The sequence spans 734 residues: MKSLSSSSPGSSEDSAQSLLLTARLYDPCSFLGMHAAPNGRLIRVFQPYMSRVWLHTLSGYQPMRSVHQDGIFEWEGEGVMHPYLLRMENTATGVIEERHDPYAFPMQISGHDLYLFNEGRLLQAYHMLGAHRVRNHGVTGTRFAVWAPNAERVSVVGDFNRWDGRVYPMMVHGHSGVWELFIPDLPEGAIYKYEIRNRISGEILLKTDPYATTYELRPNNAALTPIEQKYDWKDDDWIARRKGWDWLHAPLNIYELHVGSWKRHPDGRFYSYHELADHLIPYLQDMGYSHVELLPISEHPLDESWGYQATGYFAVTSRYGSPEAFMSFVDRCHQAGIGVILDWVPAHFPQDSFSLARFDGTALYEHEDPRLGYHHDWGTYIFNYGRNEVKSFLLSSAHYWLSAFHIDGLRVDAVASMLYLNYSRKEGEWLPNRYGGHENLEAIEFLRALNTMVHGEFPGALTFAEESTSWPAVSRPAYLGGLGFSMKWNMGWMNDTLSYMQHDPVHRRYHHNELTFNQLYAYTENFVLPLSHDEVVHGKKSMLDKMPGDGWQKFANLRLLFTYQMTCPGKKINFMGNELGQGHEWRVGHELDWYLLERDPHRGIQALTRDLNHLYLNTPALHELDFFAEGFSWIDCHDVEQSVISYQRHARDGSFVLVVLNFTPILRTGYRVGIPGSSAYQEVFNSDSIYYDGSNAGNAGKISPTGQPWSGQPDSIIITLPPLAGVILKAADG.

Asp413 functions as the Nucleophile in the catalytic mechanism. Residue Glu466 is the Proton donor of the active site.

It belongs to the glycosyl hydrolase 13 family. GlgB subfamily. As to quaternary structure, monomer.

It carries out the reaction Transfers a segment of a (1-&gt;4)-alpha-D-glucan chain to a primary hydroxy group in a similar glucan chain.. Its pathway is glycan biosynthesis; glycogen biosynthesis. Its function is as follows. Catalyzes the formation of the alpha-1,6-glucosidic linkages in glycogen by scission of a 1,4-alpha-linked oligosaccharide from growing alpha-1,4-glucan chains and the subsequent attachment of the oligosaccharide to the alpha-1,6 position. The chain is 1,4-alpha-glucan branching enzyme GlgB from Nitrosomonas europaea (strain ATCC 19718 / CIP 103999 / KCTC 2705 / NBRC 14298).